The chain runs to 347 residues: G-protein coupled receptor homolog U12 (347 aa).

Transmembrane regions (helical) follow at residues 36–56, 67–87, 103–124, 147–167, 194–214, and 236–256; these read GITL…MILY, FYVI…FFMT, LVYF…IIAT, IGIL…FVKT, IVFS…FYVI, and ILLL…ICEI. Cys101 and Cys176 form a disulfide bridge. Residues 321 to 347 form a disordered region; that stretch reads QKRKDSDASEHDQNSKSKASVEKNQPL. Residues 322 to 341 are compositionally biased toward basic and acidic residues; it reads KRKDSDASEHDQNSKSKASV.

This sequence belongs to the G-protein coupled receptor 1 family.

The protein resides in the membrane. Its function is as follows. Probable G-protein coupled receptor. In Homo sapiens (Human), this protein is G-protein coupled receptor homolog U12 (U12).